Here is a 200-residue protein sequence, read N- to C-terminus: Small ribosomal subunit protein uS4 (200 aa).

Positions Ser20–Arg41 are disordered. The region spanning Ala92–Val155 is the S4 RNA-binding domain.

Belongs to the universal ribosomal protein uS4 family. In terms of assembly, part of the 30S ribosomal subunit. Contacts protein S5. The interaction surface between S4 and S5 is involved in control of translational fidelity.

One of the primary rRNA binding proteins, it binds directly to 16S rRNA where it nucleates assembly of the body of the 30S subunit. Functionally, with S5 and S12 plays an important role in translational accuracy. The polypeptide is Small ribosomal subunit protein uS4 (Staphylococcus saprophyticus subsp. saprophyticus (strain ATCC 15305 / DSM 20229 / NCIMB 8711 / NCTC 7292 / S-41)).